A 76-amino-acid polypeptide reads, in one-letter code: DHHQSTDEPSESSKPCCDQCTCTKSIPPQCRCTDVRLNSCHSACSSCVCTFSIPAQCVCVDMKDFCYAPCKSSHDD.

7 disulfides stabilise this stretch: Cys16–Cys70, Cys17–Cys32, Cys20–Cys66, Cys22–Cys30, Cys40–Cys47, Cys44–Cys59, and Cys49–Cys57.

Belongs to the Bowman-Birk serine protease inhibitor family. HGI-III exists in a state of equilibrium between monomer, homodimer and trimer, with homodimer being the predominant form. The homodimer is stabilized by the non-covalent interaction between Lys-24 of one subunit and Asp-76 of the other subunit. The homodimer is more thermostable than the monomer. HGGI-I, HGGI-II and HGGI-III exist as monomers. In terms of processing, HGGI-I, HGGI-II and HGGI-III are produced by proteolysis of the N- and C-termini of HGI-III.

In terms of biological role, inhibitors of trypsin and chymotrypsin. HGGI-III has a higher activity than HGGI-I or HGGI-II. This Vigna unguiculata subsp. cylindrica (Horse gram) protein is Horsegram inhibitor 1.